Here is a 718-residue protein sequence, read N- to C-terminus: SANT and BTB domain regulator of class switch recombination (718 aa).

The SANT domain maps to 21–59; sequence DMILYPLIGIPQTINWETVARLVPGLTPKECVKRFDELK. The BTB domain occupies 147–255; sequence MVIHVCDEAK…QCIQYCHKNM (109 aa). The segment covering 555–576 has biased composition (acidic residues); sequence SEEEEYTTGSEVTEDEVGDEEE. Disordered stretches follow at residues 555 to 622 and 690 to 718; these read SEEE…SPFV and RASVPVTARQNSSDKNQRSKSRFGQGRPA. Positions 580–595 are enriched in basic residues; sequence KQRKKEKPKKFTKPPK. The segment covering 604 to 615 has biased composition (basic and acidic residues); the sequence is QKKEKTLEKSTS.

This sequence belongs to the KIAA1841 family. As to quaternary structure, homodimer. Interacts (via the BTB domain) with HDAC1 and NCOR2.

Its function is as follows. Negatively regulates class switch recombination or isotype switching in splenic B-cells. The sequence is that of SANT and BTB domain regulator of class switch recombination from Mus musculus (Mouse).